A 239-amino-acid chain; its full sequence is uncharacterized protein (239 aa).

It is found in the endoplasmic reticulum. The protein resides in the golgi apparatus. This is an uncharacterized protein from Schizosaccharomyces pombe (strain 972 / ATCC 24843) (Fission yeast).